The following is a 126-amino-acid chain: Profilin-1A (126 aa).

Residues 2–36 (SWQTYVDTNLVGTGAVTQAAILGLDGNTWATSAGF) are actin binding. Position 104 is an N6,N6,N6-trimethyllysine (Lys-104).

It belongs to the profilin family. In terms of assembly, occurs in many kinds of cells as a complex with monomeric actin in a 1:1 ratio.

The protein resides in the cytoplasm. Its subcellular location is the cytoskeleton. Binds to actin and affects the structure of the cytoskeleton. At high concentrations, profilin prevents the polymerization of actin, whereas it enhances it at low concentrations. By binding to PIP2, it inhibits the formation of IP3 and DG. This is Profilin-1A from Acanthamoeba castellanii (Amoeba).